Here is a 235-residue protein sequence, read N- to C-terminus: Eukaryotic translation initiation factor 4E-1 (235 aa).

Over residues 1 to 16 the composition is skewed to basic and acidic residues; sequence MAVEDTPKSVVTEEAK. Residues 1-59 are disordered; the sequence is MAVEDTPKSVVTEEAKPNSIENPIDRYHEEGDDAEEGEIAGGEGDGNVDESSKSGVPES. 2 EIF4G-binding regions span residues 60 to 63 and 70 to 106; these read HPLE and FDNP…NNMK. MRNA contacts are provided by residues 78-83, K110, and 128-129; these read KQTSWG and WE. C133 and C171 form a disulfide bridge. The segment at 154–163 is EIF4G-binding; sequence YTLLALIGEQ. Residues 178-183 and 223-227 each bind mRNA; these read RGKQER and KKLDR.

The protein belongs to the eukaryotic initiation factor 4E family. EIF4F is a multi-subunit complex, the composition of which varies with external and internal environmental conditions. It is composed of at least EIF4A, EIF4E and EIF4G. EIF4E is also known to interact with other partners. In higher plants two isoforms of EIF4F have been identified, named isoform EIF4F and isoform EIF(iso)4F. Isoform EIF4F has subunits p220 and p26, whereas isoform EIF(iso)4F has subunits p82 and p28. Interacts directly with EXA1. As to quaternary structure, (Microbial infection) Interacts with viral genome-linked protein (VPg); this interaction is possible in susceptible hosts but impaired in resistant plants. In terms of processing, according to the redox status, the Cys-133-Cys-171 disulfide bridge may have a role in regulating protein function by affecting its ability to bind capped mRNA. Expressed in all tissues except in the cells of the specialization zone of the roots.

It localises to the nucleus. It is found in the cytoplasm. In terms of biological role, component of the protein complex eIF4F, which is involved in the recognition of the mRNA cap, ATP-dependent unwinding of 5'-terminal secondary structure and recruitment of mRNA to the ribosome. Recognizes and binds the 7-methylguanosine-containing mRNA cap during an early step in the initiation of protein synthesis and facilitates ribosome binding by inducing the unwinding of the mRNAs secondary structures. Key component of recessive resistance to potyviruses. (Microbial infection) Susceptibility host factor required for viral infection by recruiting viral RNAs to the host ribosomal complex via an interaction with viral genome-linked protein (VPg). The polypeptide is Eukaryotic translation initiation factor 4E-1 (Arabidopsis thaliana (Mouse-ear cress)).